A 681-amino-acid chain; its full sequence is MGSPVHRVSLGDTWSRQMHPDIESERYMQSFDVERLTNILDGGAQNTALRRKVESIIHSYPEFSCKDNYFMTQNERYKAAMRRAFHIRLIARRLGWLEDGRELGYAYRALSGDVALNIHRVFVRALRSLGSEEQIAKWDPLCKNIQIIATYAQTELGHGTYLQGLETEATYDAATQEFVIHSPTLTATKWWPGDLGRSATHALVQAQLICSGARRGMHAFIVPIRSLQDHTPLPGIIIGDIGPKMDFDQTDNGFLQLNHVRVPRENMLSRFAQVLPDGTYVKLGTAQSNYLPMVVVRVELLSGEILPILQKACVIAMRYSVIRRQSRLRPSDPEAKVLDYQTQQQKLFPQLAISYAFHFLAVSLLEFFQHSYTAILNQDFSFLPELHALSTGMKAMMSEFCTQGAEMCRRACGGHGYSKLSGLPSLVTKLSASCTYEGENTVLYLQVARFLVKSYLQTQMSPGSTPQRSLSPSVAYLTAPDLARCPAQRAADFLCPELYTTAWAHVAVRLIKDSVQHLQTLTQSGADQHEAWNQTTVIHLQAAKVHCYYVTVKGFTEALEKLENEPAIQQVLKRLCDLHAIHGILTNSGDFLHDAFLSGAQVDMARTAYLDLLRLIRKDAILLTDAFDFTDQCLNSALGCYDGNVYERLFQWAQKSPTNTQENPAYEEYIRPLLQSWRSKL.

A phosphoserine mark is found at S3 and S9. A Phosphothreonine modification is found at T13. An N6-succinyllysine mark is found at K66, K137, K453, and K561. The Microbody targeting signal motif lies at 679–681; the sequence is SKL.

The protein belongs to the acyl-CoA oxidase family. Homodimer. FAD serves as cofactor. Present in all tissues tested: heart, brain, placenta, lung, liver, skeletal muscle, kidney and pancreas. Most abundant in heart, liver and kidney.

It localises to the peroxisome. The catalysed reaction is (25R)-3alpha,7alpha,12alpha-trihydroxy-5beta-cholestan-26-oyl-CoA + A + H2O = (24R,25R)-3alpha,7alpha,12alpha,24-tetrahydroxy-5beta-cholestan-26-oyl-CoA + AH2. The enzyme catalyses (25S)-3alpha,7alpha,12alpha-trihydroxy-5beta-cholestan-26-oyl-CoA + O2 = (24E)-3alpha,7alpha,12alpha-trihydroxy-5beta-cholest-24-en-26-oyl-CoA + H2O2. Functionally, oxidizes the CoA esters of the bile acid intermediates di- and tri-hydroxycholestanoic acids. Capable of oxidizing short as well as long chain 2-methyl branched fatty acids. The chain is Peroxisomal acyl-coenzyme A oxidase 2 from Homo sapiens (Human).